We begin with the raw amino-acid sequence, 1252 residues long: DNA-directed RNA polymerase subunit beta (1252 aa).

This sequence belongs to the RNA polymerase beta chain family. As to quaternary structure, the RNAP catalytic core consists of 2 alpha, 1 beta, 1 beta' and 1 omega subunit. When a sigma factor is associated with the core the holoenzyme is formed, which can initiate transcription.

It catalyses the reaction RNA(n) + a ribonucleoside 5'-triphosphate = RNA(n+1) + diphosphate. In terms of biological role, DNA-dependent RNA polymerase catalyzes the transcription of DNA into RNA using the four ribonucleoside triphosphates as substrates. The polypeptide is DNA-directed RNA polymerase subunit beta (Chlamydia abortus (strain DSM 27085 / S26/3) (Chlamydophila abortus)).